The following is a 319-amino-acid chain: Ribosomal RNA small subunit methyltransferase H (319 aa).

Residues 39–41, Asp-59, Phe-83, Asp-104, and Gln-111 contribute to the S-adenosyl-L-methionine site; that span reads GGH.

The protein belongs to the methyltransferase superfamily. RsmH family.

It is found in the cytoplasm. It carries out the reaction cytidine(1402) in 16S rRNA + S-adenosyl-L-methionine = N(4)-methylcytidine(1402) in 16S rRNA + S-adenosyl-L-homocysteine + H(+). Its function is as follows. Specifically methylates the N4 position of cytidine in position 1402 (C1402) of 16S rRNA. This is Ribosomal RNA small subunit methyltransferase H from Ralstonia pickettii (strain 12J).